Reading from the N-terminus, the 351-residue chain is Methionine import ATP-binding protein MetN (351 aa).

In terms of domain architecture, ABC transporter spans 2–238 (IKLNHINKTY…PKHPITRELI (237 aa)). 35-42 (GYSGAGKS) provides a ligand contact to ATP.

Belongs to the ABC transporter superfamily. Methionine importer (TC 3.A.1.24) family. The complex is composed of two ATP-binding proteins (MetN), two transmembrane proteins (MetI) and a solute-binding protein (MetQ).

It localises to the cell inner membrane. It carries out the reaction L-methionine(out) + ATP + H2O = L-methionine(in) + ADP + phosphate + H(+). It catalyses the reaction D-methionine(out) + ATP + H2O = D-methionine(in) + ADP + phosphate + H(+). In terms of biological role, part of the ABC transporter complex MetNIQ involved in methionine import. Responsible for energy coupling to the transport system. The sequence is that of Methionine import ATP-binding protein MetN from Helicobacter hepaticus (strain ATCC 51449 / 3B1).